The following is a 524-amino-acid chain: MKEPRIFPRERPTPWTRAPLPPRGRLDGSLGPQGGPVLNTGHPLGVNSDPFLMAAGSLGGNLTPFPRNPSPFPASSGSLASNPAPFPAGARDPSMASFPRGMNPTGTGAVSFPRPGGLLGPGPGPGPTLNPRTGALPGPGPLSNPRLGGLPGPGPMSNPRAGGLLGAGPDPRGGGPMGPGSGPNLRAGVLLTSGNGPPNPRPVGLGPGPNPNLRSGFLGTNPAPRSGVFPGPGLGPNPRPSGLGPGPNLDARAGGLLGTGSGLNLRMAGPQGLDLAPILRAAGLLGANSASFSQASGNMGTSPSSMARVPGPMGPNSGPSSRGIGLPGPNPSPMSRAPGPIGPNSAHFSRPVGPMGVNANPFPRGAGSSAFSQSSGTLASNPATFQRSAGLQGSNPTIFPRASGPLGPNPANFPRATGLQGPSPTTFPRSTGPLGPGQVTFPRPAAGHLGPSPAGPVGINPAPFTRPTGTLGLNPASFPRMNGPAGKSFVPFPRVGSLPGTNPAAFPRPGGPMAAMYPNGMLPP.

The segment covering Met1–Pro12 has biased composition (basic and acidic residues). Disordered regions lie at residues Met1–Pro43 and Pro64–Arg252. Low complexity predominate over residues Leu129–Gly148. Over residues Gly163–Ser181 the composition is skewed to gly residues. The residue at position 302 (Ser302) is a Phosphoserine. A compositionally biased stretch (low complexity) spans Pro312 to Gly323. Residues Pro312–Ser332 form a disordered region. Arg364 bears the Asymmetric dimethylarginine mark. An Omega-N-methylarginine modification is found at Arg387. At Ser423 the chain carries Phosphoserine.

Belongs to the DERPC family. As to expression, ubiquitously expressed, with abundant expression in kidney, skeletal muscle, testis, liver, ovary, and heart and moderate expression in prostate. Expression is significantly reduced in renal and prostate tumors. No differential expression in breast cancer cells, between lobular carcinoma and normal lobules.

Its subcellular location is the nucleus. In terms of biological role, potential tumor suppressor. Inhibits prostate tumor cell growth, when overexpressed. This is Decreased expression in renal and prostate cancer protein from Homo sapiens (Human).